The following is a 401-amino-acid chain: Insertion element ISM1 uncharacterized 48.3 kDa protein (401 aa).

In terms of biological role, this polypeptide is involved in transposition, and should therefore bind to nucleic acids. In Methanobrevibacter smithii, this protein is Insertion element ISM1 uncharacterized 48.3 kDa protein.